The following is a 514-amino-acid chain: Pleiotropic regulator 1 (514 aa).

The residue at position 1 (Met1) is an N-acetylmethionine. Ser119 is subject to Phosphoserine. The disordered stretch occupies residues 135 to 160 (KADANRTAPSGSEYRHPGASDRPQPT). Ser201 carries the phosphoserine modification. 7 WD repeats span residues 202–241 (GHLGWVRCIAVEPGNQWFVTGSADRTIKIWDLASGKLKLS), 244–283 (GHISTVRGVIVSTRSPYLFSCGEDKQVKCWDLEYNKVIRH), 286–325 (GHLSAVYGLDLHPTIDVLVTCSRDSTARIWDVRTKASVHT), 328–367 (GHTNAVATVRCQAAEPQIITGSHDTTIRLWDLVAGKTRVT), 370–410 (NHKK…QNLS), 411–449 (GHNAIINTLTVNSDGVLVSGADNGTMHLWDWRTGYNFQR), and 460–499 (DSESGIFACAFDQSESRLLTAEADKTIKVYREDDTATEET). A Phosphoserine modification is found at Ser391.

It belongs to the WD repeat PRL1/PRL2 family. In terms of assembly, identified in the spliceosome C complex. Component of the PRP19-CDC5L splicing complex composed of a core complex comprising a homotetramer of PRPF19, CDC5L, PLRG1 and BCAS2, and at least three less stably associated proteins CTNNBL1, CWC15 and HSPA8. Interacts (via its WD40 repeat domain) directly with CDC5L (via its C-terminal); the interaction is required for mRNA splicing but not for spliceosome assembly. Component of the minor spliceosome, which splices U12-type introns. Within this complex, interacts with CRIPT. Also interacts directly in the complex with BCAS2 and PRPF19. Interacts with USB1.

The protein localises to the nucleus. It localises to the nucleus speckle. Functionally, involved in pre-mRNA splicing as component of the spliceosome. Component of the PRP19-CDC5L complex that forms an integral part of the spliceosome and is required for activating pre-mRNA splicing. As a component of the minor spliceosome, involved in the splicing of U12-type introns in pre-mRNAs. This chain is Pleiotropic regulator 1 (PLRG1), found in Homo sapiens (Human).